Reading from the N-terminus, the 287-residue chain is ATP synthase gamma chain (287 aa).

The protein belongs to the ATPase gamma chain family. F-type ATPases have 2 components, CF(1) - the catalytic core - and CF(0) - the membrane proton channel. CF(1) has five subunits: alpha(3), beta(3), gamma(1), delta(1), epsilon(1). CF(0) has three main subunits: a, b and c.

The protein localises to the cell inner membrane. Functionally, produces ATP from ADP in the presence of a proton gradient across the membrane. The gamma chain is believed to be important in regulating ATPase activity and the flow of protons through the CF(0) complex. This is ATP synthase gamma chain from Alkalilimnicola ehrlichii (strain ATCC BAA-1101 / DSM 17681 / MLHE-1).